The sequence spans 415 residues: Multifunctional CCA protein (415 aa).

ATP-binding residues include G8 and R11. Residues G8 and R11 each coordinate CTP. Mg(2+) is bound by residues D21 and D23. The ATP site is built by R91, R143, and R146. CTP-binding residues include R91, R143, and R146. Residues T232–L333 enclose the HD domain.

Belongs to the tRNA nucleotidyltransferase/poly(A) polymerase family. Bacterial CCA-adding enzyme type 1 subfamily. In terms of assembly, monomer. Can also form homodimers and oligomers. It depends on Mg(2+) as a cofactor. Ni(2+) is required as a cofactor.

It catalyses the reaction a tRNA precursor + 2 CTP + ATP = a tRNA with a 3' CCA end + 3 diphosphate. The enzyme catalyses a tRNA with a 3' CCA end + 2 CTP + ATP = a tRNA with a 3' CCACCA end + 3 diphosphate. Functionally, catalyzes the addition and repair of the essential 3'-terminal CCA sequence in tRNAs without using a nucleic acid template. Adds these three nucleotides in the order of C, C, and A to the tRNA nucleotide-73, using CTP and ATP as substrates and producing inorganic pyrophosphate. tRNA 3'-terminal CCA addition is required both for tRNA processing and repair. Also involved in tRNA surveillance by mediating tandem CCA addition to generate a CCACCA at the 3' terminus of unstable tRNAs. While stable tRNAs receive only 3'-terminal CCA, unstable tRNAs are marked with CCACCA and rapidly degraded. The chain is Multifunctional CCA protein from Cupriavidus pinatubonensis (strain JMP 134 / LMG 1197) (Cupriavidus necator (strain JMP 134)).